The sequence spans 935 residues: Protein translocase subunit SecA (935 aa).

ATP is bound by residues Q90, 108–112, and D504; that span reads GEGKT. Positions 543-568 are disordered; sequence GGRRPQGFGTSKKKGKNWSPSDADIF.

The protein belongs to the SecA family. As to quaternary structure, monomer and homodimer. Part of the essential Sec protein translocation apparatus which comprises SecA, SecYEG and auxiliary proteins SecDF. Other proteins may also be involved.

It localises to the cell inner membrane. Its subcellular location is the cellular thylakoid membrane. The protein resides in the cytoplasm. It carries out the reaction ATP + H2O + cellular proteinSide 1 = ADP + phosphate + cellular proteinSide 2.. Functionally, part of the Sec protein translocase complex. Interacts with the SecYEG preprotein conducting channel. Has a central role in coupling the hydrolysis of ATP to the transfer of proteins into and across the cell membrane, serving as an ATP-driven molecular motor driving the stepwise translocation of polypeptide chains across the membrane. In terms of biological role, probably participates in protein translocation into and across both the cytoplasmic and thylakoid membranes in cyanobacterial cells. This Rippkaea orientalis (strain PCC 8801 / RF-1) (Cyanothece sp. (strain PCC 8801)) protein is Protein translocase subunit SecA.